The primary structure comprises 478 residues: Proline--tRNA ligase (478 aa).

The protein belongs to the class-II aminoacyl-tRNA synthetase family. ProS type 3 subfamily. As to quaternary structure, homodimer.

The protein resides in the cytoplasm. The enzyme catalyses tRNA(Pro) + L-proline + ATP = L-prolyl-tRNA(Pro) + AMP + diphosphate. Functionally, catalyzes the attachment of proline to tRNA(Pro) in a two-step reaction: proline is first activated by ATP to form Pro-AMP and then transferred to the acceptor end of tRNA(Pro). This is Proline--tRNA ligase from Methanococcoides burtonii (strain DSM 6242 / NBRC 107633 / OCM 468 / ACE-M).